A 1452-amino-acid chain; its full sequence is Receptor-type tyrosine-protein phosphatase mu (1452 aa).

A signal peptide spans 1–20 (MRTLGTCLVTLAGLLLTAAG). Topologically, residues 21–742 (ETFSGGCLFD…PEKQTDHTVK (722 aa)) are extracellular. The 163-residue stretch at 22–184 (TFSGGCLFDE…VKVLGHPCTR (163 aa)) folds into the MAM domain. C27 and C36 are disulfide-bonded. 4 N-linked (GlcNAc...) asparagine glycosylation sites follow: N72, N92, N131, and N249. 2 disulfides stabilise this stretch: C96/C182 and C206/C260. Positions 186 to 277 (PHFLRIQNVE…VGISNYAELV (92 aa)) constitute an Ig-like C2-type domain. Fibronectin type-III domains follow at residues 284-379 (PIAP…CADP), 382-480 (GPRK…TDED), 481-587 (LPGA…SAPS), and 589-671 (PAYE…DSLQ). Residues N406, N414, N454, N534, N544, N598, N651, and N681 are each glycosylated (N-linked (GlcNAc...) asparagine). Residues 743–764 (IAGVIAGILLFVIIFLGVVLVM) form a helical membrane-spanning segment. Residues 765 to 1452 (KKRKLAKKRK…EVALEYLNSG (688 aa)) are Cytoplasmic-facing. S821 bears the Phosphoserine mark. Tyrosine-protein phosphatase domains lie at 900-1154 (FKEE…ILEA) and 1186-1448 (IKEE…ALEY). Substrate-binding positions include D1063, 1095–1101 (CSAGAGR), and Q1139. The active-site Phosphocysteine intermediate is C1095. Catalysis depends on C1389, which acts as the Phosphocysteine intermediate.

It belongs to the protein-tyrosine phosphatase family. Receptor class 2B subfamily. Homodimer. Most abundant in lung, less in brain and heart.

It is found in the cell membrane. The enzyme catalyses O-phospho-L-tyrosyl-[protein] + H2O = L-tyrosyl-[protein] + phosphate. In terms of biological role, receptor protein-tyrosine phosphatase that mediates homotypic cell-cell interactions and plays a role in adipogenic differentiation via modulation of p120 catenin/CTNND1 phosphorylation. Promotes CTNND1 dephosphorylation and prevents its cytoplasmic localization where it inhibits SLC2A4 membrane trafficking. In turn, SLC2A4 is directed to the plasma membrane and performs its glucose transporter function. In Mus musculus (Mouse), this protein is Receptor-type tyrosine-protein phosphatase mu (Ptprm).